The chain runs to 312 residues: Protein phosphatase PTC7 homolog fig (312 aa).

The PPM-type phosphatase domain maps to 42-306; that stretch reads IQGSSKDQLA…DDITVILASV (265 aa). Positions 83, 84, and 228 each coordinate Mn(2+).

It belongs to the PP2C family. Requires Mg(2+) as cofactor. Mn(2+) is required as a cofactor.

The enzyme catalyses O-phospho-L-seryl-[protein] + H2O = L-seryl-[protein] + phosphate. It carries out the reaction O-phospho-L-threonyl-[protein] + H2O = L-threonyl-[protein] + phosphate. The polypeptide is Protein phosphatase PTC7 homolog fig (Drosophila mojavensis (Fruit fly)).